The primary structure comprises 296 residues: Glycine--tRNA ligase alpha subunit (296 aa).

The protein belongs to the class-II aminoacyl-tRNA synthetase family. As to quaternary structure, tetramer of two alpha and two beta subunits.

The protein localises to the cytoplasm. The enzyme catalyses tRNA(Gly) + glycine + ATP = glycyl-tRNA(Gly) + AMP + diphosphate. The protein is Glycine--tRNA ligase alpha subunit of Prochlorococcus marinus (strain SARG / CCMP1375 / SS120).